The sequence spans 489 residues: MDYKHNFATSPDSFLDGRQNPLLYTDFLSSNKELIYKQPSGPGLVDSAYNFHHQNSLHDRSVQENLGPMFQPFGVDISHLPITNPPIFQSSLPAFDQPVYKRRISISNGQISQLGEDLETVENLYNCQPPILSSKAQQNPNPQQVANPSAAIYPSFSSNELQNVPQPHEQATVIPEAAPQTGSKNIYAAMTPYDSNIKLNIPAVAATCDIPSATPSIPSGDSTMNQAYINMQLRLQAQMQTKAWKNAQLNVHPCTPASNSSVSSSSSCQNINDHNIENQSVHSSISHGVNHHTVNNSCQNAELNISSSLPYESKCPDVNLTHANSKPQYKDATSALKNNINSEKDVHTAPFSSMHTTATFQIKQEARPQKIENNTAGLKDGAKAWKRARLLERNRIAASKCRQRKKMSQLQLQREFDQISKENTMMKKKIENYEKLVQKMKKISRLHMQECTINGGNNSYQSLQNKDSDVNGFLKMIEEMIRSSSLYDE.

The region spanning 384 to 447 is the bZIP domain; the sequence is AWKRARLLER…QKMKKISRLH (64 aa). Residues 386–406 form a basic motif region; that stretch reads KRARLLERNRIAASKCRQRKK. A leucine-zipper region spans residues 412–419; the sequence is LQREFDQI.

This sequence belongs to the bZIP family.

The protein localises to the nucleus. Transcriptional activator of promoters containing ATF/CREB sites. Can independently stimulate transcription through ATF/CREB sites. Important for a variety of biological functions including growth on non-optimal carbon sources. Regulates the expression of COS8. Has efficient silencing blocking activities. The sequence is that of ATF/CREB activator 1 (ACA1) from Saccharomyces cerevisiae (strain ATCC 204508 / S288c) (Baker's yeast).